Consider the following 95-residue polypeptide: Aspartyl/glutamyl-tRNA(Asn/Gln) amidotransferase subunit C (95 aa).

This sequence belongs to the GatC family. Heterotrimer of A, B and C subunits.

It carries out the reaction L-glutamyl-tRNA(Gln) + L-glutamine + ATP + H2O = L-glutaminyl-tRNA(Gln) + L-glutamate + ADP + phosphate + H(+). It catalyses the reaction L-aspartyl-tRNA(Asn) + L-glutamine + ATP + H2O = L-asparaginyl-tRNA(Asn) + L-glutamate + ADP + phosphate + 2 H(+). Functionally, allows the formation of correctly charged Asn-tRNA(Asn) or Gln-tRNA(Gln) through the transamidation of misacylated Asp-tRNA(Asn) or Glu-tRNA(Gln) in organisms which lack either or both of asparaginyl-tRNA or glutaminyl-tRNA synthetases. The reaction takes place in the presence of glutamine and ATP through an activated phospho-Asp-tRNA(Asn) or phospho-Glu-tRNA(Gln). The chain is Aspartyl/glutamyl-tRNA(Asn/Gln) amidotransferase subunit C from Dehalococcoides mccartyi (strain ATCC BAA-2266 / KCTC 15142 / 195) (Dehalococcoides ethenogenes (strain 195)).